A 1293-amino-acid polypeptide reads, in one-letter code: MSDEEEDSVSEGFSASEDEWKPSKDVKGGESSDDDDSDFDELQAEGGAAGSSGRSSAVAGKRGDHKAPSGIKGSSVKKRKPTGQSLRSKLYNKYRPPPKTFPTSPSQQKENTPRASGSKNAKTPNESGARNQHGPADSSSESSVEDYLVNPADLDLHSTFFAGGQKEKSPAPQFDCNAGITNLSDSGSEDNNESSFEDKAGNAFDFRGLLENANSLERTRDALSKRNVTATPPRSQAATMDVNALLALGENQNYQSVEVEEREGNQRKKAGRGAPAAPPTLDEPSRLSKTKSTRIKRHTKTRPVSTVVANAGDTDDSDFEEVADADLSSDQDDGETPNISGDLEIRVGLEGLRPTKEQKTQHELEMALKRRLNRDIKDRQILLHKVSLMCQIARSLKYNRLLSESDSLMQATLKLLPSRNAYPTERGTELKYLQSFVTWFKTSIKLLSPNLYSAQSPATKEAILEALLEQVKRKEARCKQDMIFIFIALARGMGMHCRLIVNLQPMPLRPAASDLIPIKLRPDDKNKSQTVESERESEDEKPKKDKKAGKPAEKESSKSTISKEAEKKNNAKKAEAKPLSKSTTKGSETTKSGTVPKVKKELSLSSKLVEKSKHQKAYTSSKSDTSFDEKPSTSSSSKCLKEEYSELGLSKKLLKPTLSSKLVLKSKNQSSFSSNKSDTSFEENPSTSSSSKSLKEETAKLSSSKLEDKKVASPAETKTKVQSSLLKRVTTQNISESGDSKKPKVAPVDTFSPVAGRTRRATVKPKTEEKPQVVGSPVIPKLMLSKVKQLNAKHSDTENASPANKHLQEQRNTRETRSRSKSPKVLISPSFLKKKSDGADSTSDPQKHQMAPETKARISPNFLSEALPARQLRSRGQKASSLAIPQLDGGDDVPLPKKRPKLEKLKNSQDSDEVFEPAKPVKKAPVLPKSVQNLRKDRRVMSTDDEGGSRLNRKTDASDMWVEVWSDVEEQWICIDLFKGKLHCVDTIRKNATPGLAYVFAFQDDQSLKDVTARYCASWSTTVRKARVEKAWLDETIAPYLGRRTKRDITEDDQLRRIHSDKPLPKSISEFKDHPLYVLERHLLKFQGLYPPDAPTLGFIRGEAVYSRDCVHLLHSREIWLKSARVVKLGEQPYKVVKARPKWDRLTRTVIKDQPLEIFGYWQTQEYEPPTAENGIVPRNAYGNVELFKDCMLPKKTVHLRLPGLMRICKKLNIDCANAVVGFDFHQGACHPMYDGFIVCEEFREVVTAAWEEDQQVQVLKEQEKYETRVYGNWKKLIKGLLIRERLKKKYNF.

Disordered stretches follow at residues 1–199 (MSDE…FEDK), 217–239 (ERTR…QAAT), 255–341 (QSVE…NISG), 514–640 (DLIP…SKCL), and 658–919 (LSSK…EPAK). The segment covering 18 to 30 (DEWKPSKDVKGGE) has biased composition (basic and acidic residues). Residues S31, S32, and S37 each carry the phosphoserine modification. The segment covering 31 to 43 (SSDDDDSDFDELQ) has biased composition (acidic residues). A compositionally biased stretch (low complexity) spans 51–60 (SSGRSSAVAG). Composition is skewed to polar residues over residues 101-130 (FPTS…SGAR) and 226-238 (RNVT…SQAA). The span at 288–301 (SKTKSTRIKRHTKT) shows a compositional bias: basic residues. Residues 313–335 (DTDDSDFEEVADADLSSDQDDGE) show a composition bias toward acidic residues. A compositionally biased stretch (basic and acidic residues) spans 520-578 (LRPDDKNKSQTVESERESEDEKPKKDKKAGKPAEKESSKSTISKEAEKKNNAKKAEAKP). A phosphoserine mark is found at S533 and S537. Residues 580-594 (SKSTTKGSETTKSGT) show a composition bias toward low complexity. The span at 598–612 (VKKELSLSSKLVEKS) shows a compositional bias: basic and acidic residues. Residues 658–692 (LSSKLVLKSKNQSSFSSNKSDTSFEENPSTSSSSK) show a composition bias toward low complexity. The span at 693 to 711 (SLKEETAKLSSSKLEDKKV) shows a compositional bias: basic and acidic residues. Residues 720–737 (KVQSSLLKRVTTQNISES) are compositionally biased toward polar residues. Basic and acidic residues predominate over residues 806 to 818 (HLQEQRNTRETRS). Phosphoserine is present on residues S908 and S911. Short sequence motifs (nuclear localization signal) lie at residues 922-938 (KKAP…RKDR), 1195-1211 (KKTV…ICKK), and 1275-1291 (KKLI…KKKY).

This sequence belongs to the XPC family. As to quaternary structure, heterodimer.

The protein localises to the nucleus. In terms of biological role, involved in DNA excision repair. May play a part in DNA damage recognition and/or in altering chromatin structure to allow access by damage-processing enzymes. Functionally, involved in nucleotide excision repair of DNA damaged with UV light, bulky adducts, or cross-linking agents. In Drosophila melanogaster (Fruit fly), this protein is DNA repair protein complementing XP-C cells homolog.